Reading from the N-terminus, the 608-residue chain is MEADITNLRNKLKECEDERLKAAHYGLQLLERQTELQSQLDKCHEEMMITAEKYNQEKHALQREVELKSRMLDSLSCECEALKQQQKAQLEQLEVQLHRSHRQEVSDLKNKLENLKVELDEARLGEKQLKQKLDLQGELLAHKSEELRLLSEQRVLSSMSSELLALETELTAAEGVKNALKEEVNELQYKQEQLECLNTSLLHQVDRLKEEKEEREREAVSYYNALEKARVENQDLQVQLGHALQQAADPNSKGNSLFAEVEDRRVAMERQLNLMKDKYQSLKKQNAFTRDQMNKMKLQISTLLRMRGSQTEFEQQERLFAMIEQKNGEIKHLLGEINKLEKFKNLYESMESRPSTSDTACVLEDSTYYSDLLQLKLDKLNKENESTKDELSIQRMKALFESQRALDIERKLFTNERHLQLSESENMKLRAKLDELKLKYEPEERIEVPVLKRRREVLPLNITTPEETEETAAASATEDGVSRLPPHREEESCLNSLKDNTVQWKQPASSCVQPASLSPHKNLHLDTQPKKEKKCVKLVDSPANIEVLHEQSGNTPNSPRLTAESKLPTEVKERIETTSKLGKGACKKSHNIIYVSSKSAPETQCSQQ.

Met1 is modified (N-acetylmethionine). Residues 1–445 (MEADITNLRN…LKLKYEPEER (445 aa)) adopt a coiled-coil conformation. The segment at 465-487 (PEETEETAAASATEDGVSRLPPH) is disordered. A phosphoserine mark is found at Ser516, Ser518, and Ser558.

Belongs to the Spindly family. Interacts with KNTC1 and ZW10. These interactions appear weak and may be transient or indirect. Interacts with dynein intermediate chain and dynactin (DCTN1). Interacts with the catalytically active form of USP45. In terms of processing, monoubiquitinated with'Lys-48' linkage. Deubiquitinated by USP45.

It localises to the cytoplasm. The protein localises to the cytoskeleton. Its subcellular location is the microtubule organizing center. The protein resides in the centrosome. It is found in the chromosome. It localises to the centromere. The protein localises to the kinetochore. Its subcellular location is the nucleus. The protein resides in the spindle pole. In terms of biological role, required for the localization of dynein and dynactin to the mitotic kintochore. Dynein is believed to control the initial lateral interaction between the kinetochore and spindle microtubules and to facilitate the subsequent formation of end-on kinetochore-microtubule attachments mediated by the NDC80 complex. Also required for correct spindle orientation. Does not appear to be required for the removal of spindle assembly checkpoint (SAC) proteins from the kinetochore upon bipolar spindle attachment. Acts as an adapter protein linking the dynein motor complex to various cargos and converts dynein from a non-processive to a highly processive motor in the presence of dynactin. Facilitates the interaction between dynein and dynactin and activates dynein processivity (the ability to move along a microtubule for a long distance without falling off the track). Plays a role in cell migration. This chain is Protein Spindly (Spdl1), found in Mus musculus (Mouse).